The sequence spans 463 residues: Putative dipeptidase YtjP (463 aa).

Histidine 85 contributes to the Zn(2+) binding site. Aspartate 87 is an active-site residue. Residue aspartate 116 coordinates Zn(2+). Catalysis depends on glutamate 150, which acts as the Proton acceptor. Positions 151, 174, and 436 each coordinate Zn(2+).

The protein belongs to the peptidase M20A family. The cofactor is Zn(2+).

In Bacillus subtilis (strain 168), this protein is Putative dipeptidase YtjP (ytjP).